The sequence spans 678 residues: UvrABC system protein C (678 aa).

The span at 1–13 shows a compositional bias: basic residues; sequence MKKNISYGKHKTF. A disordered region spans residues 1–25; that stretch reads MKKNISYGKHKTFPSKLNGLEKQHS. One can recognise a GIY-YIG domain in the interval 69-147; that stretch reads HKPGVYRMFD…IKRLHPRFNV (79 aa). The UVR domain occupies 257–292; it reads QSVKNDMIQAMHKAAEDLDFEQAAVYRDRLSALSHI.

This sequence belongs to the UvrC family. In terms of assembly, interacts with UvrB in an incision complex.

The protein resides in the cytoplasm. Functionally, the UvrABC repair system catalyzes the recognition and processing of DNA lesions. UvrC both incises the 5' and 3' sides of the lesion. The N-terminal half is responsible for the 3' incision and the C-terminal half is responsible for the 5' incision. The chain is UvrABC system protein C from Bartonella quintana (strain Toulouse) (Rochalimaea quintana).